Consider the following 1035-residue polypeptide: NACHT, LRR and PYD domains-containing protein 3 (1035 aa).

The 93-residue stretch at 1 to 93 (MKMASTRCKL…YEKAKRDEPK (93 aa)) folds into the Pyrin domain. Ser5 carries the phosphoserine modification. Residues Cys8 and Cys108 are joined by a disulfide bond. Residue Tyr13 is modified to Phosphotyrosine. Cys130 is lipidated: S-palmitoyl cysteine. The interval 131–134 (KKKK) is required for binding to phosphatidylinositol 4-phosphate (PtdIns4P). A phosphotyrosine mark is found at Tyr136, Tyr140, and Tyr143. Positions 140–210 (YRKYVRSRFQ…SPIKMELLFD (71 aa)) constitute an FISNA domain. 2 positions are modified to phosphoserine: Ser161 and Ser163. A Phosphotyrosine modification is found at Tyr168. Position 169 (Thr169) interacts with ATP. 2 positions are modified to phosphoserine: Ser198 and Ser201. Residues 220–536 (HTVVFQGAAG…EFFAAMYYLL (317 aa)) form the NACHT domain. 226 to 233 (GAAGIGKT) serves as a coordination point for ATP. Phosphoserine occurs at positions 265 and 295. Lys324 is covalently cross-linked (Glycyl lysine isopeptide (Lys-Gly) (interchain with G-Cter in ubiquitin)). Residue Ser334 is modified to Phosphoserine. Positions 355-359 (LEKLQ) match the KFERQ-like motif 1 motif. Residue Lys430 forms a Glycyl lysine isopeptide (Lys-Gly) (interchain with G-Cter in ubiquitin) linkage. An ATP-binding site is contributed by His522. A KFERQ-like motif 2 motif is present at residues 603–607 (QIRLE). Lys689 is covalently cross-linked (Glycyl lysine isopeptide (Lys-Gly) (interchain with G-Cter in ubiquitin)). Phosphoserine occurs at positions 727 and 734. LRR repeat units lie at residues 741 to 761 (SLTE…RVLC), 770 to 791 (NIRR…DISL), 798 to 818 (KLVE…RLLC), 827 to 848 (NLKK…DLAS), and 855 to 875 (SLTR…AILC). The short motif at 797–801 (QKLVE) is the KFERQ-like motif 3 element. Ser805 carries the phosphoserine modification. S-palmitoyl cysteine attachment occurs at residues Cys836, Cys837, and Cys843. Residue Tyr860 is modified to Phosphotyrosine. Residue Lys877 forms a Glycyl lysine isopeptide (Lys-Gly) (interchain with G-Cter in ubiquitin) linkage. LRR repeat units follow at residues 884–905 (NLQK…ALSS), 912–932 (NLTH…KLLC), 941–962 (KLQV…DLST), and 969–990 (SLRK…MFCE). A Glycyl lysine isopeptide (Lys-Gly) (interchain with G-Cter in ubiquitin) cross-link involves residue Lys926. Cys957 carries the S-palmitoyl cysteine lipid modification. Residue Lys972 forms a Glycyl lysine isopeptide (Lys-Gly) (interchain with G-Cter in ubiquitin) linkage. Phosphoserine is present on Ser974. A KFERQ-like motif 4 motif is present at residues 990–994 (EVLKQ). At Ser1034 the chain carries Phosphoserine.

Belongs to the NLRP family. As to quaternary structure, sensor component of NLRP3 inflammasomes; inflammasomes are supramolecular complexes that assemble in the cytosol in response to pathogens and other damage-associated signals and play critical roles in innate immunity and inflammation. The core of NLRP3 inflammasomes consists of a signal sensor component (NLRP3), an adapter (PYCARD/ASC), which recruits an effector pro-inflammatory caspase (CASP1 and, possibly, CASP4 and CASP5). Homodecamer; inactive NLRP3 forms homodecameric double-ring cages that hide pyrin domains within NACHT-LRR rings to avoid premature activation. Interacts (via pyrin domain) with PYCARD/ASC (via pyrin domain); interaction is direct. Interacts (via LRR repeat domain) with NEK7 (via N-terminus); the interaction is required for the formation of the complex NLRP3:PYCARD, oligomerization of PYCARD/ASC and activation of CASP1. Interacts (via LRR repeat domain) with NR4A1/Nur77 (via N-terminus); the interaction is direct, requires activation of NR4A1 by its ligands NBRE-containing dsDNA and lipopolysaccharide, and stimulates the association of NLRP3 with NEK7 for non-canonical NLRP3 inflammasome activation. Interacts with CARD8; leading to inhibit formation of the NLRP3 inflammasome. Interacts with MEFV; this interaction targets NLRP3 to degradation by autophagy, hence preventing excessive IL1B- and IL18-mediated inflammation. Interacts with EIF2AK2/PKR; this interaction requires EIF2AK2 activity, is accompanied by EIF2AK2 autophosphorylation and promotes inflammasome assembly in response to specific stimuli. Interacts with GBP5 (via DAPIN domain); this interaction promotes inflammasome assembly in response to microbial and soluble, but not crystalline, agents. Interacts with PML (isoform PML-1) (via the leucine-rich repeat (LRR) domain); PML-mediated increase in NLRP3 inflammasome activation does not depend upon this interaction. Interacts (via NACHT domain) with DHX33 (via DEAH box); NLRP3 activation in presence of cytosolic dsRNA is mediated by DHX33. Interacts (via NACHT and LRR domains) with ARRB2; this interaction is direct and inducible by polyunsaturated fatty acids (PUFAs). Interacts (via NACHT domain) with DDX3X under both LPS-primed and inflammasome-activating conditions. Interacts with IRF4 (via the LRR domain); this interaction is direct and is required for optimal IRF4 binding to IL4 promoter and efficient IL4 transactivation during differentiation of Th2 helper T-cells. Interacts with MAVS; promoting localization to mitochondria and activation of the NLRP3 inflammasome. Interacts with MARK4; promoting localization of NLRP3 to the microtubule organizing center (MTOC). Interacts with TRIM50; this interaction also promotes NLRP3 oligomerization and subsequent inflammasome activation. Interacts with IRGM; preventing NLRP3 inflammasome assembly and promoting NLRP3 degradation. Interacts (via KFERQ-like motifs) with HSPA8/HSC70; promoting NLRP3 degradation by the chaperone-mediated autophagy pathway. Interacts (via NACHT and LLR domains) with ABHD8; this interaction is enhanced in the presence of NLRP3 inflammasome inducers, such as ATP, nigericin, silica, or alum. Interaction with ABHD8 leads the recruitment of ZDHHC12, hence facilitating NLRP3 palmitoylation and degradation by the chaperone-mediated autophagy pathway (CMA), therefore attenuating NLRP3 inflammasome activation. In terms of processing, the disulfide bond in the pyrin domain might play a role in reactive oxygen species-mediated activation. Phosphorylation at Ser-198 by MAPK8/JNK1 increases inflammasome activation by promoting deubiquitination by BRCC3 and NLRP3 homooligomerization. Phosphorylation at Ser-805 by CSNK1A1 prevents inflammasome activation by preventing NEK7 recruitment. Phosphorylation at Ser-5 in the pyrin domain inhibits homomultimerization of NLRP3 and activation of the NLRP3 inflammasome: dephosphorylation by protein phosphatase 2A (PP2A) promotes assembly of the NLRP3 inflammasome. Phosphorylation at Ser-295 by PKD/PRKD1 promotes NLRP3 inflammasome assembly. Phosphorylation by ERK1/MAPK3 promotes NLRP3 inflammasome assembly. Phosphorylation by BTK (at Tyr-136, Tyr-140, Tyr-143 and Tyr-168) in the region that mediates binding to phosphatidylinositol phosphate, promotes relocalization of NLRP3 and assembly of the NLRP3 inflammasome. Phosphorylation at Tyr-860 inhibits NLRP3 inflammasome assembly: dephosphorylation by PTPN22 promotes inflammasome activation. Phosphorylated by LATS1 and LATS2 at Ser-265 following palmitoylation by ZDHHC1, promoting its relocalization to the microtubule organizing center (MTOC), where NLRP3 is activated by NEK7, leading to inflammasome assembly and activation. Post-translationally, ubiquitinated; undergoes both 'Lys-48'- and 'Lys-63'-linked polyubiquitination. Ubiquitination does not lead to degradation, but inhibits inflammasome activation. Deubiquitination is catalyzed by BRCC3 and associated with NLRP3 activation and inflammasome assembly. This process can be induced by the activation of Toll-like receptors (by LPS), through a non-transcriptional pathway dependent on the mitochondrial production of reactive oxygen species, and by ATP. Ubiquitinated by TRIM31 via 'Lys-48'-linked ubiquitination, leading to its degradation by the proteasome. Ubiquitinated at Lys-689 by the SCF(FBXL2) complex, leading to its degradation by the proteasome. Ubiquitinated by TRIM35 via 'lys-48' and 'Lys-63'-linked ubiquitination leading to inhibition of NLRP3 inflammasome activation. Undergoes 'Lys-27'-linked polyubiquitination by MARCHF5, leading to NLRP3-NEK7 complex formation and NLRP3 oligomerization. In terms of processing, palmitoylation by ZDHHC12 promotes NLRP3 degradation by the chaperone-mediated autophagy pathway (CMA) and therefore limits NLRP3 inflammasome activation. Interaction with ZDHHC12, and hence NLRP3 palmitoylation, is greatly enhanced by ABHD8. Following palmitoylation, HSPA8/HSC70 recognizes and binds the KFERQ-like motifs on NLRP3 and promotes NLRP3 recruitment to lysosomes, where it is degraded via the chaperone-mediated autophagy pathway in a LAMP2-dependent process. Palmitoylation at Cys-836 and Cys-837 by ZDHHC5 enhances its binding to NEK7 leading to inflammasome assembly and activation. Palmitoylation at Cys-130 and Cys-957 by ZDHHC1 facilitates phosphorylation at Ser-265 by LATS1 and LATS2, promoting its relocalization to the microtubule organizing center (MTOC), where NLRP3 is activated by NEK7, leading to inflammasome assembly and activation. Depalmitoylated by ABHD17A. Degraded via selective autophagy following interaction with IRGM. IRGM promotes NLRP3 recruitment to autophagosome membranes, promoting its SQSTM1/p62-dependent autophagy-dependent degradation. As to expression, highly expressed in oocyte, testis, spleen, thymus and kidney.

It is found in the cytoplasm. It localises to the cytosol. The protein localises to the inflammasome. The protein resides in the cytoskeleton. Its subcellular location is the microtubule organizing center. It is found in the golgi apparatus membrane. It localises to the endoplasmic reticulum. The protein localises to the mitochondrion. The protein resides in the secreted. Its subcellular location is the nucleus. It carries out the reaction ATP + H2O = ADP + phosphate + H(+). Its activity is regulated as follows. Under resting conditions, NLRP3 binds ADP and is autoinhibited. Inactive NLRP3 forms homodecameric double-ring cages that hide pyrin domains within NACHT-LRR rings to avoid premature activation. NLRP3 activation stimuli include extracellular ATP, nigericin, reactive oxygen species, crystals of monosodium urate or cholesterol, amyloid-beta fibers, environmental or industrial particles and nanoparticles, such as asbestos, silica, aluminum salts, cytosolic dsRNA, etc. Almost all stimuli trigger intracellular K(+) efflux. These stimuli lead to membrane perturbations that induce activation of NLRP3. Upon activation, NLRP3 is transported to microtubule organizing center (MTOC), where it is unlocked by NEK7, leading to its relocalization to dispersed trans-Golgi network (dTGN) vesicle membranes and recruitment of PYCARD/ASC for the formation of an active inflammasome complex. NEK7-activated NLRP3 forms a disk-shaped inflammasome. NLRP3 and PYCARD/ASC interact via their respective pyrin domains; interaction initiates speck formation (nucleation) which greatly enhances further addition of soluble PYCARD/ASC molecules to the speck in a prion-like polymerization process. Clustered PYCARD/ASC nucleates the formation of CASP1 filaments through the interaction of their respective CARD domains, acting as a platform for CASP1 polymerization and activation. Active CASP1 then processes IL1B and IL18 precursors, leading to the release of mature cytokines in the extracellular milieu and inflammatory response. NLRP3 inflammasome assembly is inhibited by IRGM, which impedes NLRP3 oligomerization. NLRP3 inflammasome is inhibited by cyclic AMP (cAMP), which directly binds NLRP3; inhibition is relieved by calcium-sensing receptor CASR, which inhibits production of cAMP. Specifically inhibited by sulfonylurea MCC950 (also named CP-456,773, CRID3), a potent and specific small-molecule inhibitor of the NLRP3 inflammasome that acts by preventing ATP hydrolysis. Sensor component of the NLRP3 inflammasome, which mediates inflammasome activation in response to defects in membrane integrity, leading to secretion of inflammatory cytokines IL1B and IL18 and pyroptosis. In response to pathogens and other damage-associated signals that affect the integrity of membranes, initiates the formation of the inflammasome polymeric complex composed of NLRP3, CASP1 and PYCARD/ASC. Recruitment of pro-caspase-1 (proCASP1) to the NLRP3 inflammasome promotes caspase-1 (CASP1) activation, which subsequently cleaves and activates inflammatory cytokines IL1B and IL18 and gasdermin-D (GSDMD), promoting cytokine secretion and pyroptosis. Activation of NLRP3 inflammasome is also required for HMGB1 secretion; stimulating inflammatory responses. Under resting conditions, ADP-bound NLRP3 is autoinhibited. NLRP3 activation stimuli include extracellular ATP, nigericin, reactive oxygen species, crystals of monosodium urate or cholesterol, amyloid-beta fibers, environmental or industrial particles and nanoparticles, such as asbestos, silica, aluminum salts, cytosolic dsRNA, etc. Almost all stimuli trigger intracellular K(+) efflux. These stimuli lead to membrane perturbation and activation of NLRP3. Upon activation, NLRP3 is transported to microtubule organizing center (MTOC), where it is unlocked by NEK7, leading to its relocalization to dispersed trans-Golgi network (dTGN) vesicle membranes and formation of an active inflammasome complex. Associates with dTGN vesicle membranes by binding to phosphatidylinositol 4-phosphate (PtdIns4P). Shows ATPase activity. Its function is as follows. Independently of inflammasome activation, regulates the differentiation of T helper 2 (Th2) cells and has a role in Th2 cell-dependent asthma and tumor growth. During Th2 differentiation, required for optimal IRF4 binding to IL4 promoter and for IRF4-dependent IL4 transcription. Binds to the consensus DNA sequence 5'-GRRGGNRGAG-3'. May also participate in the transcription of IL5, IL13, GATA3, CCR3, CCR4 and MAF. The sequence is that of NACHT, LRR and PYD domains-containing protein 3 (NLRP3) from Macaca mulatta (Rhesus macaque).